Consider the following 650-residue polypeptide: Probable basic-leucine zipper transcription factor K (650 aa).

A coiled-coil region spans residues 37–180 (IDNNNNNYSN…KQQKQQQQEQ (144 aa)). Disordered regions lie at residues 109-130 (IPQQ…QEQE) and 242-279 (TTLN…NNNL). Positions 118-129 (DQQEDQDQEQEQ) are enriched in acidic residues. Positions 242–251 (TTLNTNLQSD) are enriched in polar residues. A compositionally biased stretch (low complexity) spans 252–278 (NNNNNNNNNNNNNNNNNNNNNNNNNNN). A coiled-coil region spans residues 259 to 286 (NNNNNNNNNNNNNNNNNNNNLLNEKQIE). The bZIP domain maps to 305 to 368 (FNKIEKGKRN…IEIMRSEPES (64 aa)). The tract at residues 307–327 (KIEKGKRNQTESSKNFRERKK) is basic motif. A leucine-zipper region spans residues 330–337 (IKDIELKL). Residues 452–466 (NNNNNNNNNNNNNNN) are compositionally biased toward low complexity. The disordered stretch occupies residues 452–473 (NNNNNNNNNNNNNNNDNDDDNE).

Belongs to the bZIP family.

The protein localises to the nucleus. In terms of biological role, probable transcriptional regulator. In Dictyostelium discoideum (Social amoeba), this protein is Probable basic-leucine zipper transcription factor K (bzpK).